The primary structure comprises 273 residues: Phosphatidylglycerol--prolipoprotein diacylglyceryl transferase (273 aa).

Transmembrane regions (helical) follow at residues 21 to 41 (ISVRWYGLMYLVGFMFALWLA), 60 to 80 (LLFAGFLGVVLGGRIGYVLFY), 95 to 115 (VWTGGMSFHGGLLGVITAMLW), 124 to 144 (FFGVADMIAPLVPFGLGMGRM), 176 to 196 (SQLYEMALEGIVLFFILNWFI), 203 to 223 (GSVSGLFLAGYGTFRFLVEYV), and 236 to 256 (FISMGQILSLPMVIIGVLMMV). Residue arginine 143 participates in a 1,2-diacyl-sn-glycero-3-phospho-(1'-sn-glycerol) binding.

This sequence belongs to the Lgt family.

The protein resides in the cell inner membrane. The enzyme catalyses L-cysteinyl-[prolipoprotein] + a 1,2-diacyl-sn-glycero-3-phospho-(1'-sn-glycerol) = an S-1,2-diacyl-sn-glyceryl-L-cysteinyl-[prolipoprotein] + sn-glycerol 1-phosphate + H(+). The protein operates within protein modification; lipoprotein biosynthesis (diacylglyceryl transfer). Its function is as follows. Catalyzes the transfer of the diacylglyceryl group from phosphatidylglycerol to the sulfhydryl group of the N-terminal cysteine of a prolipoprotein, the first step in the formation of mature lipoproteins. The chain is Phosphatidylglycerol--prolipoprotein diacylglyceryl transferase from Vibrio atlanticus (strain LGP32) (Vibrio splendidus (strain Mel32)).